Consider the following 186-residue polypeptide: MYNNYTDDNLVTSSTNYLIIDSISDSISDSISDSTNNLIHNPENNFEKKYTNIITKGKNYTKSTDFIVKIVYFEVIDGVCDRNKSSKKIVGKFIHGGIINTEIPVRSKIRKIILETICEDIKESCKYRFDYYHYKSNPKKIIIKFKNGELYPIIKINSKNATYRTTKKIKHRQTKYVNKKNQCILF.

This is an uncharacterized protein from Acanthamoeba polyphaga mimivirus (APMV).